The chain runs to 239 residues: Fatty acid metabolism regulator protein (239 aa).

An HTH gntR-type domain is found at 6–74 (QSPAGFAEEY…HGKPTKVNNF (69 aa)). The segment at residues 34 to 53 (ERELSELIGVTRTTLREVLQ) is a DNA-binding region (H-T-H motif).

In terms of assembly, homodimer.

The protein resides in the cytoplasm. In terms of biological role, multifunctional regulator of fatty acid metabolism. This chain is Fatty acid metabolism regulator protein, found in Salmonella paratyphi C (strain RKS4594).